Reading from the N-terminus, the 699-residue chain is MDKVLNREESMELMDLLGLERAAWGNLPLMRKAYLRKCKEFHPDKGGDEDKMKRMNTLYKKMEQDVKVAHQPDFGAWHSSEVPTYGTEEWEAWWSSFNEKWDEDLFCHEDMFQSDEEGTADSQHSTPPKKKRKVEDPKDFPPDLHAFLSQAVFSNRTLACFAVYTTKEKGQILYKKLMEKYSVTFISRHSSHGHNILFFLTPHRHRVSAINNFCQKLCTFSFLICKGVNKEYLLYSTLSRDPYSIVEESIQGGLKEHDFNPEEPEETKQVSWKLITEYALETKCEDVFLLLGMYLEFQHNPEECRKCQKKEQPYHFKFHEKHFANATIFADSKNQKSICQQAVDTVLAKKRVDTLHMTREEMLTERFNHILDKMDIMFGATGSAVLEHYMAGVAWLHCLLPKMDTLIYDFLNCIVFNIPKRRYWLFKGPIDSGKTTLAAGLLDLCGGKALNVNLPMERLTFELGVAIDQFMVVFEDVKGSGAESKDLPSGHGINNLDSLRDYLDGSVKVNLEKKHLNKRTQIFPPGLVTMNEYPLPKTLQARFVKQIDFKPKIYLRKALNNSEFLLEKRILQSGMTLLLLLIWFRPVADFASDIQHRIVQWKERLDSEISMYTFSRMKYNICMGKCILDWAREEESETEDSGHGSSTESQSQCFSQASDTSGSADAPASQTPDPYDHDNPYHICKGFVCFKRPKTPPPK.

N-acetylmethionine; by host is present on Met-1. Residues 12 to 75 enclose the J domain; that stretch reads ELMDLLGLER…VKVAHQPDFG (64 aa). The LXCXE motif signature appears at 105–109; the sequence is LFCHE. Phosphoserine; by host occurs at positions 114, 122, and 125. Residues 115–137 are disordered; sequence DEEGTADSQHSTPPKKKRKVEDP. Thr-126 carries the post-translational modification Phosphothreonine; by host. Positions 127 to 134 match the Nuclear localization signal motif; the sequence is PPKKKRKV. Positions 141 to 256 form a DNA-binding region, T-ag OBD; sequence PPDLHAFLSQ…EESIQGGLKE (116 aa). Residues 267–359 form a T-ag D1-type zinc finger; sequence TKQVSWKLIT…KRVDTLHMTR (93 aa). Zn(2+) is bound by residues Cys-304, Cys-307, His-315, and His-319. The 161-residue stretch at 402–562 folds into the SF3 helicase domain; the sequence is KMDTLIYDFL…IYLRKALNNS (161 aa). Residue 428–435 participates in ATP binding; it reads GPIDSGKT. A disordered region spans residues 637–678; the sequence is ETEDSGHGSSTESQSQCFSQASDTSGSADAPASQTPDPYDHD. Residues 643–672 show a composition bias toward polar residues; that stretch reads HGSSTESQSQCFSQASDTSGSADAPASQTP. The residue at position 661 (Ser-661) is a Phosphoserine; by host. Position 691 is an N6-acetyllysine; by host (Lys-691). A Phosphothreonine; by host modification is found at Thr-695.

Forms homohexamers in the presence of ATP. Interacts with host HDAC1. Interacts (via LXCXE domain) with host RB1; the interaction induces the aberrant dissociation of RB1-E2F1 complex thereby disrupting RB1's activity. Interacts (via LXCXE domain) with host pRB-related proteins RBL1 and RBL2. Interacts (via C-terminus) with host TOP1 and POLA1 allowing DNA replication. Interacts with host TP53, inhibiting TP53 binding to DNA. Interacts with host preinitiation complex components TBP, TFIIA and TFIID to regulate transcription initiation. The cofactor is Mg(2+). Phosphorylated on both serine and threonine residues. Small t antigen inhibits the dephosphorylation by the AC form of PP2A. In terms of processing, O-Glycosylated near the C-terminal region. Post-translationally, acetylated by CBP in a TP53-dependent manner.

It localises to the host nucleus. It carries out the reaction Couples ATP hydrolysis with the unwinding of duplex DNA by translocating in the 3'-5' direction.. The enzyme catalyses ATP + H2O = ADP + phosphate + H(+). Its function is as follows. Isoform large T antigen is a key early protein essential for both driving viral replication and inducing cellular transformation. Plays a role in viral genome replication by driving entry of quiescent cells into the cell cycle and by autoregulating the synthesis of viral early mRNA. Displays highly oncogenic activities by corrupting the host cellular checkpoint mechanisms that guard cell division and the transcription, replication, and repair of DNA. Participates in the modulation of cellular gene expression preceeding viral DNA replication. This step involves binding to host key cell cycle regulators retinoblastoma protein RB1/pRb and TP53. Induces the disassembly of host E2F1 transcription factors from RB1, thus promoting transcriptional activation of E2F1-regulated S-phase genes. Inhibits host TP53 binding to DNA, abrogating the ability of TP53 to stimulate gene expression. Plays the role of a TFIID-associated factor (TAF) in transcription initiation for all three RNA polymerases, by stabilizing the TBP-TFIIA complex on promoters. Initiates viral DNA replication and unwinding via interactions with the viral origin of replication. Binds two adjacent sites in the SV40 origin. The replication fork movement is facilitated by Large T antigen helicase activity. Has processive 3'-5' DNA helicase activity which requires a short 3' single-stranded region and ATP. Activates the transcription of viral late mRNA, through host TBP and TFIIA stabilization. Interferes with histone deacetylation mediated by HDAC1, leading to activation of transcription. In Papio hamadryas ursinus (Chacma baboon), this protein is Large T antigen.